Reading from the N-terminus, the 142-residue chain is Large ribosomal subunit protein uL11 (142 aa).

Belongs to the universal ribosomal protein uL11 family. Part of the ribosomal stalk of the 50S ribosomal subunit. Interacts with L10 and the large rRNA to form the base of the stalk. L10 forms an elongated spine to which L12 dimers bind in a sequential fashion forming a multimeric L10(L12)X complex. Post-translationally, one or more lysine residues are methylated.

Functionally, forms part of the ribosomal stalk which helps the ribosome interact with GTP-bound translation factors. This chain is Large ribosomal subunit protein uL11, found in Hamiltonella defensa subsp. Acyrthosiphon pisum (strain 5AT).